A 937-amino-acid polypeptide reads, in one-letter code: Periplasmic nitrate reductase (937 aa).

Residues 1-31 (MSMNRREFLKTTAAAAAASAVGISIPSEAKA) constitute a signal peptide (tat-type signal). In terms of domain architecture, 4Fe-4S Mo/W bis-MGD-type spans 40–96 (WQWDKAVCRFCGTGCGIMVAVKDDKIVAVKGDPESPVNRGINCIKGYFNAKIMYGAD). The [4Fe-4S] cluster site is built by C47, C50, C54, and C82. Mo-bis(molybdopterin guanine dinucleotide) contacts are provided by residues K84, Q152, N177, C181, 214–221 (WGANMAEM), M422, Q426, N532, K580, D607, and 827–836 (TGRVLEHWHS). W903 contacts substrate. Residues N911 and K928 each coordinate Mo-bis(molybdopterin guanine dinucleotide).

Belongs to the prokaryotic molybdopterin-containing oxidoreductase family. NasA/NapA/NarB subfamily. Component of the periplasmic nitrate reductase NapAB complex composed of NapA and NapB. [4Fe-4S] cluster is required as a cofactor. Requires Mo-bis(molybdopterin guanine dinucleotide) as cofactor. In terms of processing, predicted to be exported by the Tat system. The position of the signal peptide cleavage has not been experimentally proven.

Its subcellular location is the periplasm. The enzyme catalyses 2 Fe(II)-[cytochrome] + nitrate + 2 H(+) = 2 Fe(III)-[cytochrome] + nitrite + H2O. In terms of biological role, catalytic subunit of the periplasmic nitrate reductase complex NapAB. Receives electrons from NapB and catalyzes the reduction of nitrate to nitrite. In Nautilia profundicola (strain ATCC BAA-1463 / DSM 18972 / AmH), this protein is Periplasmic nitrate reductase.